We begin with the raw amino-acid sequence, 459 residues long: Vasoactive intestinal polypeptide receptor 1 (459 aa).

The first 30 residues, 1-30, serve as a signal peptide directing secretion; sequence MRPPSLPPARWLCVLAGALACALGPAGSRA. Residues 31–142 lie on the Extracellular side of the membrane; the sequence is ASPHQECEYL…EQQQTEFYDA (112 aa). Disulfide bonds link cysteine 37–cysteine 209, cysteine 50–cysteine 72, cysteine 63–cysteine 105, cysteine 86–cysteine 122, and cysteine 216–cysteine 286. 4 N-linked (GlcNAc...) asparagine glycosylation sites follow: asparagine 58, asparagine 69, asparagine 100, and asparagine 104. A helical transmembrane segment spans residues 143–167; sequence VKTGYTIGYSLSLASLLVAMAILSL. Residues 168–175 lie on the Cytoplasmic side of the membrane; that stretch reads FRKLHCTR. A helical transmembrane segment spans residues 176–197; that stretch reads NYIHMHLFMSFILRATAVFIKD. Residues 198–217 are Extracellular-facing; it reads MALFNNGETDHCSEASVSCK. The chain crosses the membrane as a helical span at residues 218–242; that stretch reads AAVVFFQYCVMANFFWLLVEGLYLH. The Cytoplasmic segment spans residues 243-255; sequence TLLAVSFFSERKY. Residues 256–277 form a helical membrane-spanning segment; it reads FWGYILIGWGVPSVFIMIWTIV. The Extracellular portion of the chain corresponds to 278–293; sequence RIHFEDFGCWDTIINS. Asparagine 292 is a glycosylation site (N-linked (GlcNAc...) asparagine). Residues 294–318 traverse the membrane as a helical segment; it reads SLWWIIKGPILISILVNFILFICII. At 319-340 the chain is on the cytoplasmic side; it reads RILVQKLRPPDIGKNDSSPYSR. The chain crosses the membrane as a helical span at residues 341 to 361; the sequence is LAKSTLLLIPLFGVHYVMFAF. Over 362-369 the chain is Extracellular; sequence FPDNFKAQ. The chain crosses the membrane as a helical span at residues 370–393; the sequence is VKMVFELVVGSFQGFVVAILYCFL. Residues 394-459 lie on the Cytoplasmic side of the membrane; that stretch reads NGEVQAELRR…SSFQAEVSLV (66 aa).

The protein belongs to the G-protein coupled receptor 2 family. In terms of assembly, interacts with ADCYAP1/PACAP; activated by both PACAP27 and PACAP38 neuropeptides. Interacts with VIP; the interaction results in VIPR1 activation.

It is found in the cell membrane. In terms of biological role, g protein-coupled receptor activated by the neuropeptides vasoactive intestinal peptide (VIP) and pituitary adenylate cyclase-activating polypeptide (ADCYAP1/PACAP). Binds VIP and both PACAP27 and PACAP38 bioactive peptides with the following order of ligand affinity VIP = PACAP27 &gt; PACAP38. Ligand binding causes a conformation change that triggers signaling via guanine nucleotide-binding proteins (G proteins) and modulates the activity of downstream effectors. Activates cAMP-dependent pathway. The polypeptide is Vasoactive intestinal polypeptide receptor 1 (Mus musculus (Mouse)).